Reading from the N-terminus, the 104-residue chain is L-rhamnose mutarotase (104 aa).

Tyrosine 18 is a binding site for substrate. Histidine 22 functions as the Proton donor in the catalytic mechanism. Substrate is bound by residues tyrosine 41 and 76–77 (WW).

This sequence belongs to the rhamnose mutarotase family. Homodimer.

It is found in the cytoplasm. The catalysed reaction is alpha-L-rhamnose = beta-L-rhamnose. It functions in the pathway carbohydrate metabolism; L-rhamnose metabolism. In terms of biological role, involved in the anomeric conversion of L-rhamnose. The chain is L-rhamnose mutarotase from Escherichia coli O17:K52:H18 (strain UMN026 / ExPEC).